Reading from the N-terminus, the 364-residue chain is Mannose-1-phosphate guanyltransferase (364 aa).

Belongs to the transferase hexapeptide repeat family.

The protein localises to the cytoplasm. It carries out the reaction alpha-D-mannose 1-phosphate + GTP + H(+) = GDP-alpha-D-mannose + diphosphate. The protein operates within nucleotide-sugar biosynthesis; GDP-alpha-D-mannose biosynthesis; GDP-alpha-D-mannose from alpha-D-mannose 1-phosphate (GTP route): step 1/1. In terms of biological role, involved in cell wall synthesis where it is required for glycosylation. Involved in cell cycle progression through cell-size checkpoint. In Emericella nidulans (strain FGSC A4 / ATCC 38163 / CBS 112.46 / NRRL 194 / M139) (Aspergillus nidulans), this protein is Mannose-1-phosphate guanyltransferase (mpg1).